The primary structure comprises 507 residues: MVYRKPPDGGWGWVIVIVSFFTQFLCYGSPLAVGVLYLEWLDAFGEGKGKTAWVGSLANGIGLLASPVCSICVSSFGARPVAIFSGFMVAGGLMMSSFAPNIYFLYLSYGIVVGLGCGLLYNATVTITCQYFDKRRGLALGLISTGSSVGLFIYAALQRELIELYGLDGCLLIVGALSLNILACGSLMRPLESSDSPSPEKACTDKVPDQYFVYHEKEKTVEENISILEKGYIDEKCANNVPDYKQDNILNKNVLSSINVDEKDTYKKKVVEQTNFCKQLAKRKWQLYLNYWEETVVLFKNRVFSALFFAILLFDIGGFPPSLLMEDIARSANINEEDYHMPLVSIIGIMTAIGKLILGILADFKWVNTLYLYVLTLLMMGAALLAIPFARSYFTLAVLSGILGFLTGNWSIFPYVTTKTVGIEKLTHAYGILMFFAGLGNSLGPPIVGWFYDWTQEYDTAFYFSGFCVLLGGFLLLLAALPCWNACTDRSSKLPPNTYSYKVASSA.

Residues 1–12 (MVYRKPPDGGWG) lie on the Extracellular side of the membrane. A helical membrane pass occupies residues 13-33 (WVIVIVSFFTQFLCYGSPLAV). At 34–52 (GVLYLEWLDAFGEGKGKTA) the chain is on the cytoplasmic side. Residues 53 to 73 (WVGSLANGIGLLASPVCSICV) form a helical membrane-spanning segment. The Extracellular segment spans residues 74-79 (SSFGAR). A helical transmembrane segment spans residues 80 to 100 (PVAIFSGFMVAGGLMMSSFAP). At 101–102 (NI) the chain is on the cytoplasmic side. The chain crosses the membrane as a helical span at residues 103 to 123 (YFLYLSYGIVVGLGCGLLYNA). Residues 124–136 (TVTITCQYFDKRR) lie on the Extracellular side of the membrane. The chain crosses the membrane as a helical span at residues 137–157 (GLALGLISTGSSVGLFIYAAL). The Cytoplasmic portion of the chain corresponds to 158-163 (QRELIE). A helical transmembrane segment spans residues 164-184 (LYGLDGCLLIVGALSLNILAC). Over 185 to 302 (GSLMRPLESS…EETVVLFKNR (118 aa)) the chain is Extracellular. A helical membrane pass occupies residues 303 to 323 (VFSALFFAILLFDIGGFPPSL). Residues 324–340 (LMEDIARSANINEEDYH) lie on the Cytoplasmic side of the membrane. Residues 341-361 (MPLVSIIGIMTAIGKLILGIL) form a helical membrane-spanning segment. Topologically, residues 362 to 369 (ADFKWVNT) are extracellular. Residues 370–390 (LYLYVLTLLMMGAALLAIPFA) traverse the membrane as a helical segment. The Cytoplasmic portion of the chain corresponds to 391–395 (RSYFT). The chain crosses the membrane as a helical span at residues 396–416 (LAVLSGILGFLTGNWSIFPYV). Over 417–430 (TTKTVGIEKLTHAY) the chain is Extracellular. A helical transmembrane segment spans residues 431–451 (GILMFFAGLGNSLGPPIVGWF). The Cytoplasmic portion of the chain corresponds to 452-460 (YDWTQEYDT). Residues 461 to 481 (AFYFSGFCVLLGGFLLLLAAL) traverse the membrane as a helical segment. Residues 482 to 507 (PCWNACTDRSSKLPPNTYSYKVASSA) lie on the Extracellular side of the membrane.

It belongs to the major facilitator superfamily. Monocarboxylate porter (TC 2.A.1.13) family.

Its subcellular location is the cell membrane. It carries out the reaction creatine(in) = creatine(out). The catalysed reaction is (R)-carnitine(in) = (R)-carnitine(out). In terms of biological role, extracellular pH-and Na(+)-sensitive low-affinity creatine transporter. Also functions as a pH-independent carnitine efflux transporter. This chain is Monocarboxylate transporter 9 (SLC16A9), found in Gallus gallus (Chicken).